A 336-amino-acid polypeptide reads, in one-letter code: tRNA N6-adenosine threonylcarbamoyltransferase (336 aa).

Fe cation-binding residues include His-114 and His-118. Substrate contacts are provided by residues 136–140 (LVSGG), Asp-169, Gly-182, Asp-186, and Asn-275. Asp-302 contributes to the Fe cation binding site.

The protein belongs to the KAE1 / TsaD family. It depends on Fe(2+) as a cofactor.

Its subcellular location is the cytoplasm. The catalysed reaction is L-threonylcarbamoyladenylate + adenosine(37) in tRNA = N(6)-L-threonylcarbamoyladenosine(37) in tRNA + AMP + H(+). Its function is as follows. Required for the formation of a threonylcarbamoyl group on adenosine at position 37 (t(6)A37) in tRNAs that read codons beginning with adenine. Is involved in the transfer of the threonylcarbamoyl moiety of threonylcarbamoyl-AMP (TC-AMP) to the N6 group of A37, together with TsaE and TsaB. TsaD likely plays a direct catalytic role in this reaction. The chain is tRNA N6-adenosine threonylcarbamoyltransferase from Streptococcus agalactiae serotype III (strain NEM316).